The chain runs to 549 residues: Cation/acetate symporter ActP (549 aa).

The next 13 helical transmembrane spans lie at 33–53 (WQAIIMFLIFVVFTLGITYWA), 77–97 (LAIAGDYMSAASFLGISALVF), 103–123 (GLIYSLGFLVGWPIILFLIAE), 148–168 (ILSACGSLVVVALYLIAQMVG), 183–203 (IAVVLVGVLMMMYVLFGGMLA), 206–226 (WVQIIKAVLLLFGASFMAFMV), 262–282 (ISALSLGLGLMFGTAGLPHIL), 303–323 (GFMGYFYILTFIIGFGAIMLV), 355–375 (LFLGFISAVAFATILAVVAGL), 404–424 (VSKITVLILGVIAIILGVLFE), 428–448 (IAFMVGLAFAIAASCNFPIIL), 464–484 (GGWLGLITAVVLMILGPTIWV), and 493–513 (IFPYEYPALFSITVAFLGIWF).

It belongs to the sodium:solute symporter (SSF) (TC 2.A.21) family.

The protein resides in the cell inner membrane. Its function is as follows. Transports acetate. The protein is Cation/acetate symporter ActP of Escherichia coli (strain ATCC 8739 / DSM 1576 / NBRC 3972 / NCIMB 8545 / WDCM 00012 / Crooks).